The primary structure comprises 45 residues: Large ribosomal subunit protein bL34 (45 aa).

The segment covering 1–10 has biased composition (polar residues); it reads MTQRTLGGTN. Residues 1–45 form a disordered region; it reads MTQRTLGGTNRKQKRTSGFRARMRTHNGRKVIQARRSKGRHRLAV. Residues 11 to 45 show a composition bias toward basic residues; it reads RKQKRTSGFRARMRTHNGRKVIQARRSKGRHRLAV.

The protein belongs to the bacterial ribosomal protein bL34 family.

In Synechocystis sp. (strain ATCC 27184 / PCC 6803 / Kazusa), this protein is Large ribosomal subunit protein bL34 (rpmH).